Consider the following 393-residue polypeptide: Sister chromatid cohesion protein DCC1 (393 aa).

This sequence belongs to the DCC1 family. As to quaternary structure, component of the CTF18-RFC complex which consists of CTF8, CTF18, DSCC1 and the RFC complex. Interacts with CTF8 and CTF18. Interacts with DDX11.

The protein resides in the nucleus. Its function is as follows. Loads PCNA onto primed templates regulating velocity, spacing and restart activity of replication forks. May couple DNA replication to sister chromatid cohesion through regulation of the acetylation of the cohesin subunit SMC3. The polypeptide is Sister chromatid cohesion protein DCC1 (DSCC1) (Homo sapiens (Human)).